The primary structure comprises 81 residues: Adenoregulin-related peptide (81 aa).

A signal peptide spans 1 to 22 (MAFLKKSLLLVLFLGLVSLSIC). A propeptide spanning residues 23 to 43 (EEEKRENEDEEEQEDDEQSEM) is cleaved from the precursor. The interval 24 to 46 (EEKRENEDEEEQEDDEQSEMKRG) is disordered. Residues 30–40 (EDEEEQEDDEQ) show a composition bias toward acidic residues. The residue at position 78 (isoleucine 78) is an Isoleucine amide. A propeptide spanning residues 79–81 (GEQ) is cleaved from the precursor.

In terms of tissue distribution, expressed by the skin glands.

The protein localises to the secreted. In terms of biological role, has antibacterial activity against Gram-positive bacterium M.luteus NCT C2665 and against Gram-negative bacterium E.coli K12D31. This is Adenoregulin-related peptide from Agalychnis callidryas (Red-eyed tree frog).